Here is a 309-residue protein sequence, read N- to C-terminus: UDP-URONIC ACID TRANSPORTER 1 (309 aa).

Helical transmembrane passes span 9–29 (TLFISTLIISWYSSNIGVLLL), 43–63 (IFLTMCHMSACAILSYISIVF), 78–98 (FLKVATLSIVFCASVVGGNIS), 104–124 (VSFNQAVGATTPFFTALFAYL), 131–151 (AWVTYGALVPVVAGVVIASGG), 152–172 (EPGFHWFGFIMCISATAARAF), 193–213 (LMLYMSPIAVIALLPVTLFME), 231–251 (WILLLVNSVMAYSANLLNFLV), 256–278 (SALTLQVLGNAKGAVAVVISILI), and 283–302 (VTVMGIGGYSITVLGVVAYG).

This sequence belongs to the TPT transporter family. TPT (TC 2.A.7.9) subfamily. In terms of tissue distribution, ubiquitous.

It localises to the golgi apparatus membrane. In terms of biological role, UDP-glucuronic acid transporter that modulates the polysaccharide composition of seed mucilage. Transports UDP-glucuronic acid (UDP-GlcA) and UDP-galacturonic acid (UDP-GalA) in vitro. The protein is UDP-URONIC ACID TRANSPORTER 1 of Arabidopsis thaliana (Mouse-ear cress).